We begin with the raw amino-acid sequence, 481 residues long: Argininosuccinate lyase (481 aa).

It belongs to the lyase 1 family. Argininosuccinate lyase subfamily.

The protein localises to the cytoplasm. It catalyses the reaction 2-(N(omega)-L-arginino)succinate = fumarate + L-arginine. It functions in the pathway amino-acid biosynthesis; L-arginine biosynthesis; L-arginine from L-ornithine and carbamoyl phosphate: step 3/3. The protein is Argininosuccinate lyase of Methanococcus maripaludis (strain DSM 14266 / JCM 13030 / NBRC 101832 / S2 / LL).